The sequence spans 418 residues: Actin-like protein 7B (418 aa).

The interval 1–42 (MATKNSPSPKPMGTAQGDPGEAGTLPAPEAAGIRDTGSTQLK) is disordered. Residue Ser-8 is modified to Phosphoserine.

It belongs to the actin family. Testis specific.

It localises to the cytoplasm. It is found in the cytoskeleton. This is Actin-like protein 7B (Actl7b) from Mus musculus (Mouse).